The following is a 65-amino-acid chain: Large ribosomal subunit protein bL35 (65 aa).

Belongs to the bacterial ribosomal protein bL35 family.

This chain is Large ribosomal subunit protein bL35, found in Acetivibrio thermocellus (strain ATCC 27405 / DSM 1237 / JCM 9322 / NBRC 103400 / NCIMB 10682 / NRRL B-4536 / VPI 7372) (Clostridium thermocellum).